A 176-amino-acid chain; its full sequence is Transcription factor 21 (176 aa).

The tract at residues 1-84 (MSTGSISDVD…QVQRNAANAR (84 aa)) is disordered. Over residues 31–44 (GTSNESTEDSSNCE) the composition is skewed to polar residues. The bHLH domain maps to 76–128 (VQRNAANARERARMRVLSKAFSRLKTTLPWVPPDTKLSKLDTLRLASSYIAHL).

As to quaternary structure, efficient DNA binding requires dimerization with another bHLH protein. As to expression, expressed in the cranial paraxial mesoderm from 20 hpf and subsequently becomes restricted to the pharyngeal mesoderm that will form the muscle. Expression in the proepicardial organ is first seen at 40hpf in a cluster of cells between the myocardium and yolk. Also expressed in the developing arches. Expression begins to surround the heart by day 3 of development, and by 96 hpf, expression is restricted to the outer epicardial layer surrounding the myocardium.

It localises to the nucleus. Functionally, involved in epithelial-mesenchymal interactions in kidney and lung morphogenesis that include epithelial differentiation and branching morphogenesis. The sequence is that of Transcription factor 21 from Danio rerio (Zebrafish).